Consider the following 440-residue polypeptide: Thymidine phosphorylase (440 aa).

Belongs to the thymidine/pyrimidine-nucleoside phosphorylase family. As to quaternary structure, homodimer.

The catalysed reaction is thymidine + phosphate = 2-deoxy-alpha-D-ribose 1-phosphate + thymine. It functions in the pathway pyrimidine metabolism; dTMP biosynthesis via salvage pathway; dTMP from thymine: step 1/2. Functionally, the enzymes which catalyze the reversible phosphorolysis of pyrimidine nucleosides are involved in the degradation of these compounds and in their utilization as carbon and energy sources, or in the rescue of pyrimidine bases for nucleotide synthesis. The chain is Thymidine phosphorylase from Salmonella schwarzengrund (strain CVM19633).